A 452-amino-acid chain; its full sequence is MERRIFGIETEYGVTCTFRGQRRLSPDEVARYLFRRVVSWGRSSNVFLRNGSRLYLDVGSHPEYATAECDDLSELVVHDKAGERILEGLLVDAEQRLAEEGVTGDIYLFKNNTDSAGNSYGCHENYLVGRHGEFSRLADVLIPFLVSRQIVVGAGKVLQTPRGAIYCISQRAEHIWEGVSSATTRSRPIINTRDEPHADAERYRRLHVIVGDSNMNETTTLLKVAVTDLVLRMIEAGVPIRDMTLENPIRAIREISHDMTGRRKVRLANGKEMSALEIQSEYHSRAAEFVDREGFGPVHRQMLELWGRVLKAVDTGDLSLIDREIDWATKYQLIERYRAKRDLPMSSPRIAQMDLAYHDISRTRGLYYLLERNNQVDRVAHEPRVFEAKNVPPQTTRARLRGEFIRRAQEKRRDFTVDWVHLKLNDQAQRTVLCKDPFKAVDERVDKLIASM.

E9 provides a ligand contact to Mg(2+). R53 is an ATP binding site. Y55 is a binding site for Mg(2+). The Proton acceptor role is filled by D57. Residue E63 participates in Mg(2+) binding. Residues T66 and W419 each coordinate ATP.

It belongs to the Pup ligase/Pup deamidase family. Pup-conjugating enzyme subfamily.

The enzyme catalyses ATP + [prokaryotic ubiquitin-like protein]-L-glutamate + [protein]-L-lysine = ADP + phosphate + N(6)-([prokaryotic ubiquitin-like protein]-gamma-L-glutamyl)-[protein]-L-lysine.. The protein operates within protein degradation; proteasomal Pup-dependent pathway. It participates in protein modification; protein pupylation. Catalyzes the covalent attachment of the prokaryotic ubiquitin-like protein modifier Pup to the proteasomal substrate proteins, thereby targeting them for proteasomal degradation. This tagging system is termed pupylation. The ligation reaction involves the side-chain carboxylate of the C-terminal glutamate of Pup and the side-chain amino group of a substrate lysine. The polypeptide is Pup--protein ligase (Geodermatophilus obscurus (strain ATCC 25078 / DSM 43160 / JCM 3152 / CCUG 61914 / KCC A-0152 / KCTC 9177 / NBRC 13315 / NRRL B-3577 / G-20)).